We begin with the raw amino-acid sequence, 880 residues long: Alanine--tRNA ligase (880 aa).

Positions 571, 575, 673, and 677 each coordinate Zn(2+).

The protein belongs to the class-II aminoacyl-tRNA synthetase family. Zn(2+) serves as cofactor.

The protein resides in the cytoplasm. It catalyses the reaction tRNA(Ala) + L-alanine + ATP = L-alanyl-tRNA(Ala) + AMP + diphosphate. In terms of biological role, catalyzes the attachment of alanine to tRNA(Ala) in a two-step reaction: alanine is first activated by ATP to form Ala-AMP and then transferred to the acceptor end of tRNA(Ala). Also edits incorrectly charged Ser-tRNA(Ala) and Gly-tRNA(Ala) via its editing domain. The polypeptide is Alanine--tRNA ligase (Oleidesulfovibrio alaskensis (strain ATCC BAA-1058 / DSM 17464 / G20) (Desulfovibrio alaskensis)).